The primary structure comprises 120 residues: uncharacterized protein (120 aa).

A helical transmembrane segment spans residues 93-109; sequence LCVGISTTMIIQVLFLL.

The protein resides in the membrane. This is an uncharacterized protein from Saccharomyces cerevisiae (strain ATCC 204508 / S288c) (Baker's yeast).